We begin with the raw amino-acid sequence, 86 residues long: Small ribosomal subunit protein bS20 (86 aa).

Belongs to the bacterial ribosomal protein bS20 family.

Binds directly to 16S ribosomal RNA. In Kocuria rhizophila (strain ATCC 9341 / DSM 348 / NBRC 103217 / DC2201), this protein is Small ribosomal subunit protein bS20.